The chain runs to 484 residues: Malonate-semialdehyde dehydrogenase 3 (484 aa).

Residues phenylalanine 152, lysine 176, glutamate 179, arginine 180, and serine 229 each contribute to the NAD(+) site. The active-site Nucleophile is the cysteine 284. Glutamate 384 serves as a coordination point for NAD(+).

The protein belongs to the aldehyde dehydrogenase family. IolA subfamily. Homotetramer.

The catalysed reaction is 3-oxopropanoate + NAD(+) + CoA + H2O = hydrogencarbonate + acetyl-CoA + NADH + H(+). It catalyses the reaction 2-methyl-3-oxopropanoate + NAD(+) + CoA + H2O = propanoyl-CoA + hydrogencarbonate + NADH + H(+). The protein operates within polyol metabolism; myo-inositol degradation into acetyl-CoA; acetyl-CoA from myo-inositol: step 7/7. Its function is as follows. Catalyzes the oxidation of malonate semialdehyde (MSA) and methylmalonate semialdehyde (MMSA) into acetyl-CoA and propanoyl-CoA, respectively. Is involved in a myo-inositol catabolic pathway. Bicarbonate, and not CO2, is the end-product of the enzymatic reaction. This Geobacillus kaustophilus (strain HTA426) protein is Malonate-semialdehyde dehydrogenase 3.